A 64-amino-acid polypeptide reads, in one-letter code: Alpha-toxin Ts5 (64 aa).

The 63-residue stretch at 2–64 (KDGYPVEGDN…KEPTKTSGRC (63 aa)) folds into the LCN-type CS-alpha/beta domain. 4 disulfides stabilise this stretch: cysteine 12-cysteine 64, cysteine 16-cysteine 38, cysteine 24-cysteine 44, and cysteine 28-cysteine 46.

It belongs to the long (4 C-C) scorpion toxin superfamily. Sodium channel inhibitor family. Alpha subfamily. As to expression, expressed by the venom gland.

The protein localises to the secreted. Alpha toxins bind voltage-independently at site-3 of sodium channels (Nav) and inhibit the inactivation of the activated channels, thereby blocking neuronal transmission. By extending the depolarized period it indirectly affects beta-cell voltage-dependent potassium channels, thus increasing potassium permeability. The chain is Alpha-toxin Ts5 from Tityus serrulatus (Brazilian scorpion).